The chain runs to 873 residues: Tyrosine-protein kinase receptor TYRO3 (873 aa).

An N-terminal signal peptide occupies residues 1–28; sequence MELRRSMALPRLLLLGLWAAALRDGAVA. 2 consecutive Ig-like C2-type domains span residues 29-116 and 127-208; these read AGMK…KEES and PYFT…ATVQ. Residues 29 to 416 are Extracellular-facing; sequence AGMKFTGSPI…QRQPPYGTSW (388 aa). An N-linked (GlcNAc...) asparagine glycan is attached at Asn-51. 2 disulfide bridges follow: Cys-52-Cys-105 and Cys-148-Cys-191. Residues Asn-179, Asn-184, Asn-218, Asn-228, Asn-281, Asn-353, and Asn-367 are each glycosylated (N-linked (GlcNAc...) asparagine). Fibronectin type-III domains lie at 215 to 308 and 310 to 403; these read PPLN…TLEL and PSST…AQEV. A helical transmembrane segment spans residues 417–437; that stretch reads VPVALGILTALVTAVALALIL. Residues 438-873 lie on the Cytoplasmic side of the membrane; the sequence is LRKRRKETRF…ELETEGEKSC (436 aa). In terms of domain architecture, Protein kinase spans 505 to 776; the sequence is FTLGRMLGKG…GVLRSQLEMI (272 aa). ATP contacts are provided by residues 511–519 and Lys-537; that span reads LGKGEFGSV. Asp-642 functions as the Proton acceptor in the catalytic mechanism. A Phosphotyrosine; by autocatalysis modification is found at Tyr-673. The segment at 845 to 873 is disordered; the sequence is VEGERHPEGQEGENKSLLYELETEGEKSC. Basic and acidic residues predominate over residues 847–858; the sequence is GERHPEGQEGEN.

It belongs to the protein kinase superfamily. Tyr protein kinase family. AXL/UFO subfamily. In terms of processing, autophosphorylated on tyrosine residues. In terms of tissue distribution, detected in embryonic retina (at protein level). detected in brain, retina, kidney and in retinal Mueller glia-like cells.

It localises to the cell membrane. The enzyme catalyses L-tyrosyl-[protein] + ATP = O-phospho-L-tyrosyl-[protein] + ADP + H(+). Receptor tyrosine kinase that transduces signals from the extracellular matrix into the cytoplasm by binding to several ligands. Regulates many physiological processes including cell survival, migration and differentiation. Ligand binding at the cell surface induces dimerization and autophosphorylation of TYRO3 on its intracellular domain that provides docking sites for downstream signaling molecules. Following activation by ligand, enhances PI3-kinase activity and activates the AKT survival pathway, including nuclear translocation of NF-kappa-B and up-regulation of transcription of NF-kappa-B-regulated genes. This chain is Tyrosine-protein kinase receptor TYRO3 (TYRO3), found in Gallus gallus (Chicken).